A 339-amino-acid polypeptide reads, in one-letter code: Ketol-acid reductoisomerase (NADP(+)) (339 aa).

The 182-residue stretch at methionine 1–threonine 182 folds into the KARI N-terminal Rossmann domain. Residues tyrosine 24–glutamine 27, arginine 48, serine 51, and aspartate 83–glutamine 86 each bind NADP(+). Histidine 108 is an active-site residue. NADP(+) is bound at residue glycine 134. Positions threonine 183 to isoleucine 328 constitute a KARI C-terminal knotted domain. Mg(2+) contacts are provided by aspartate 191, glutamate 195, glutamate 227, and glutamate 231. Serine 252 is a binding site for substrate.

This sequence belongs to the ketol-acid reductoisomerase family. Mg(2+) serves as cofactor.

It carries out the reaction (2R)-2,3-dihydroxy-3-methylbutanoate + NADP(+) = (2S)-2-acetolactate + NADPH + H(+). It catalyses the reaction (2R,3R)-2,3-dihydroxy-3-methylpentanoate + NADP(+) = (S)-2-ethyl-2-hydroxy-3-oxobutanoate + NADPH + H(+). It functions in the pathway amino-acid biosynthesis; L-isoleucine biosynthesis; L-isoleucine from 2-oxobutanoate: step 2/4. It participates in amino-acid biosynthesis; L-valine biosynthesis; L-valine from pyruvate: step 2/4. In terms of biological role, involved in the biosynthesis of branched-chain amino acids (BCAA). Catalyzes an alkyl-migration followed by a ketol-acid reduction of (S)-2-acetolactate (S2AL) to yield (R)-2,3-dihydroxy-isovalerate. In the isomerase reaction, S2AL is rearranged via a Mg-dependent methyl migration to produce 3-hydroxy-3-methyl-2-ketobutyrate (HMKB). In the reductase reaction, this 2-ketoacid undergoes a metal-dependent reduction by NADPH to yield (R)-2,3-dihydroxy-isovalerate. The chain is Ketol-acid reductoisomerase (NADP(+)) from Acidiphilium cryptum (strain JF-5).